Consider the following 279-residue polypeptide: Large ribosomal subunit protein uL2 (279 aa).

Positions 227–279 are disordered; sequence GVAMNPVDHPMGGGEGKTSGGRHPVSPWGFPTKGKKTRDPNKLSSKFIKSKKR.

Belongs to the universal ribosomal protein uL2 family. As to quaternary structure, part of the 50S ribosomal subunit. Forms a bridge to the 30S subunit in the 70S ribosome.

Functionally, one of the primary rRNA binding proteins. Required for association of the 30S and 50S subunits to form the 70S ribosome, for tRNA binding and peptide bond formation. It has been suggested to have peptidyltransferase activity; this is somewhat controversial. Makes several contacts with the 16S rRNA in the 70S ribosome. This is Large ribosomal subunit protein uL2 from Neorickettsia sennetsu (strain ATCC VR-367 / Miyayama) (Ehrlichia sennetsu).